Consider the following 389-residue polypeptide: Alpha-2B adrenergic receptor (389 aa).

A helical membrane pass occupies residues 1–25 (AIAAVITFLILFTIFGNALVILAVL). Residues 26-36 (TSRSLRAPQNL) lie on the Cytoplasmic side of the membrane. A helical transmembrane segment spans residues 37–62 (FLVSLAAADILVATLIIPFSLANELL). The Extracellular portion of the chain corresponds to 63–72 (GYWYFWRTWC). A disulfide bridge links Cys72 with Cys151. A helical transmembrane segment spans residues 73–95 (EVYLALDVLFCTSSIVHLCAISL). The Cytoplasmic portion of the chain corresponds to 96-117 (DRYWAVSRALEYNSKRTPRRIK). Residues 118 to 140 (CIILTVWLIAAAISLPPLIYKGD) form a helical membrane-spanning segment. Over 141 to 156 (QGPQPRGRPQCMLNQE) the chain is Extracellular. The chain crosses the membrane as a helical span at residues 157 to 180 (AWYILSSSIGSFFAPCLIMILVYL). Over 181–353 (RIYLIAKRSN…LTREKRFTFV (173 aa)) the chain is Cytoplasmic. Disordered regions lie at residues 192-218 (RGPR…PLAL) and 231-310 (DGEA…HLQQ). Basic and acidic residues predominate over residues 234–249 (ANGHSKLTGEKERETS). The helical transmembrane segment at 354 to 377 (LTVVIGVFVLCWFPFFFSYSLGAI) threads the bilayer. The Extracellular portion of the chain corresponds to 378–386 (CPQHCKVPH). A helical membrane pass occupies residues 387–389 (GLF).

It belongs to the G-protein coupled receptor 1 family. Adrenergic receptor subfamily. ADRA2B sub-subfamily. As to quaternary structure, interacts with RAB26. Interacts with PPP1R9B.

The protein resides in the cell membrane. Functionally, alpha-2 adrenergic receptors mediate the catecholamine-induced inhibition of adenylate cyclase through the action of G proteins. In Procavia capensis habessinica (Abyssinian hyrax), this protein is Alpha-2B adrenergic receptor (ADRA2B).